The chain runs to 173 residues: Shikimate kinase 1 (173 aa).

14 to 19 is a binding site for ATP; the sequence is GAGKST. S18 provides a ligand contact to Mg(2+). D36, R60, and G82 together coordinate substrate. R120 serves as a coordination point for ATP. R140 is a substrate binding site. Q157 lines the ATP pocket.

It belongs to the shikimate kinase family. As to quaternary structure, monomer. Requires Mg(2+) as cofactor.

It localises to the cytoplasm. The enzyme catalyses shikimate + ATP = 3-phosphoshikimate + ADP + H(+). The protein operates within metabolic intermediate biosynthesis; chorismate biosynthesis; chorismate from D-erythrose 4-phosphate and phosphoenolpyruvate: step 5/7. Functionally, catalyzes the specific phosphorylation of the 3-hydroxyl group of shikimic acid using ATP as a cosubstrate. This Erwinia tasmaniensis (strain DSM 17950 / CFBP 7177 / CIP 109463 / NCPPB 4357 / Et1/99) protein is Shikimate kinase 1.